The following is a 567-amino-acid chain: Allo-aromadendrene synthase TPS4FN (567 aa).

Positions 282, 319, 323, 462, and 465 each coordinate (2E,6E)-farnesyl diphosphate. Residues aspartate 319 and aspartate 323 each contribute to the Mg(2+) site. A DDXXD motif motif is present at residues aspartate 319–aspartate 323. Aspartate 465 and glutamate 473 together coordinate Mg(2+).

It belongs to the terpene synthase family. Tpsb subfamily. Mg(2+) is required as a cofactor. Mn(2+) serves as cofactor.

It catalyses the reaction (2E,6E)-farnesyl diphosphate = alpha-humulene + diphosphate. The catalysed reaction is (2E,6E)-farnesyl diphosphate = (+)-valencene + diphosphate. The enzyme catalyses (2E)-geranyl diphosphate = beta-myrcene + diphosphate. It carries out the reaction (2E,6E)-farnesyl diphosphate = allo-aromadendrene + diphosphate. It catalyses the reaction (2E,6E)-farnesyl diphosphate + H2O = palustrol + diphosphate. It functions in the pathway secondary metabolite biosynthesis; terpenoid biosynthesis. Functionally, involved in sesquiterpene olefins biosynthesis, constituants of cannabinoids and terpenoids-rich resins. Catalyzes mainly the conversion of (2E)-farnesyl diphosphate to allo-aromadendrene, and also produces minor products such as alpha-humulene, valencene and palustrol. Can also use (2E)-geranyl diphosphate as substrate with low efficiency, producing minor amounts of myrcene. In Cannabis sativa (Hemp), this protein is Allo-aromadendrene synthase TPS4FN.